Here is a 119-residue protein sequence, read N- to C-terminus: Large ribosomal subunit protein uL18 (119 aa).

Positions 1–22 (MGHVEKVARRHKIKTRSKARGQ) are disordered. A compositionally biased stretch (basic residues) spans 8 to 19 (ARRHKIKTRSKA).

It belongs to the universal ribosomal protein uL18 family. Part of the 50S ribosomal subunit; part of the 5S rRNA/L5/L18/L25 subcomplex. Contacts the 5S and 23S rRNAs.

Its function is as follows. This is one of the proteins that bind and probably mediate the attachment of the 5S RNA into the large ribosomal subunit, where it forms part of the central protuberance. This chain is Large ribosomal subunit protein uL18, found in Chlorobium phaeobacteroides (strain BS1).